The sequence spans 216 residues: ATP synthase subunit 5, mitochondrial (216 aa).

This sequence belongs to the ATPase delta chain family. In terms of assembly, F-type ATPases have 2 components, CF(1) - the catalytic core - and CF(0) - the membrane proton channel. CF(1) has five subunits: alpha(3), beta(3), gamma(1), delta(1), epsilon(1). CF(0) has three main subunits: a, b and c.

The protein resides in the mitochondrion. It is found in the mitochondrion inner membrane. In terms of biological role, mitochondrial membrane ATP synthase (F(1)F(0) ATP synthase or Complex V) produces ATP from ADP in the presence of a proton gradient across the membrane which is generated by electron transport complexes of the respiratory chain. F-type ATPases consist of two structural domains, F(1) - containing the extramembraneous catalytic core and F(0) - containing the membrane proton channel, linked together by a central stalk and a peripheral stalk. During catalysis, ATP synthesis in the catalytic domain of F(1) is coupled via a rotary mechanism of the central stalk subunits to proton translocation. Part of the complex F(0) domain and the peripheric stalk, which acts as a stator to hold the catalytic alpha(3)beta(3) subcomplex and subunit a/ATP6 static relative to the rotary elements. The chain is ATP synthase subunit 5, mitochondrial (atp5) from Schizosaccharomyces pombe (strain 972 / ATCC 24843) (Fission yeast).